The primary structure comprises 431 residues: Enolase (431 aa).

(2R)-2-phosphoglycerate is bound at residue glutamine 167. The Proton donor role is filled by glutamate 209. Positions 246, 289, and 316 each coordinate Mg(2+). (2R)-2-phosphoglycerate contacts are provided by lysine 341, arginine 370, serine 371, and lysine 392. Residue lysine 341 is the Proton acceptor of the active site.

Belongs to the enolase family. Component of the RNA degradosome, a multiprotein complex involved in RNA processing and mRNA degradation. Mg(2+) is required as a cofactor.

The protein resides in the cytoplasm. It localises to the secreted. It is found in the cell surface. It carries out the reaction (2R)-2-phosphoglycerate = phosphoenolpyruvate + H2O. Its pathway is carbohydrate degradation; glycolysis; pyruvate from D-glyceraldehyde 3-phosphate: step 4/5. Its function is as follows. Catalyzes the reversible conversion of 2-phosphoglycerate (2-PG) into phosphoenolpyruvate (PEP). It is essential for the degradation of carbohydrates via glycolysis. The sequence is that of Enolase from Shewanella sediminis (strain HAW-EB3).